We begin with the raw amino-acid sequence, 363 residues long: Trans-2,3-enoyl-CoA reductase-like (363 aa).

A Phosphoserine modification is found at S37. A run of 4 helical transmembrane segments spans residues 143 to 163 (WTTV…LFYL), 216 to 235 (NLLK…AYYI), 250 to 270 (VAIS…INVV), and 311 to 331 (ISFT…LMSI).

This sequence belongs to the steroid 5-alpha reductase family.

It is found in the membrane. The protein localises to the endoplasmic reticulum. The polypeptide is Trans-2,3-enoyl-CoA reductase-like (TECRL) (Bos taurus (Bovine)).